The primary structure comprises 290 residues: Cbb3-type cytochrome c oxidase subunit FixP (290 aa).

The Cytoplasmic segment spans residues 1 to 32 (MTDHSEFDSVSGKTTTGHEWDGIKELNTPLPR). The helical transmembrane segment at 33–53 (WWVICFYLTIVWAIGYWIVYP) threads the bilayer. Over 54 to 290 (AWPLISSNTT…VYVHSLGGGK (237 aa)) the chain is Periplasmic. Cytochrome c domains lie at 109–198 (LARA…RSLS) and 206–287 (YDAA…HSLG). Heme c contacts are provided by Cys-122, Cys-125, His-126, Met-173, Cys-219, Cys-222, His-223, and Met-264.

This sequence belongs to the CcoP / FixP family. As to quaternary structure, component of the cbb3-type cytochrome c oxidase at least composed of FixN, FixO, FixQ and FixP. Requires heme c as cofactor.

It is found in the cell inner membrane. Its pathway is energy metabolism; oxidative phosphorylation. Functionally, C-type cytochrome. Part of the cbb3-type cytochrome c oxidase complex. FixP subunit is required for transferring electrons from donor cytochrome c via its heme groups to FixO subunit. From there, electrons are shuttled to the catalytic binuclear center of FixN subunit where oxygen reduction takes place. The complex also functions as a proton pump. This Bradyrhizobium diazoefficiens (strain JCM 10833 / BCRC 13528 / IAM 13628 / NBRC 14792 / USDA 110) protein is Cbb3-type cytochrome c oxidase subunit FixP.